A 75-amino-acid polypeptide reads, in one-letter code: Beta-defensin 30 (75 aa).

The N-terminal stretch at 1-22 (MGSLQLILVLFVLLSDVPPVRS) is a signal peptide. 3 disulfides stabilise this stretch: C35/C62, C42/C56, and C46/C63.

It belongs to the beta-defensin family.

It localises to the secreted. Functionally, has antibacterial activity. The polypeptide is Beta-defensin 30 (Defb30) (Rattus norvegicus (Rat)).